Consider the following 345-residue polypeptide: Pectin lyase (345 aa).

The signal sequence occupies residues 1-24; that stretch reads MKRFCLWFAVFSLLLVLLPGKAFG. Arg-234 is a catalytic residue.

Belongs to the polysaccharide lyase 1 family.

It localises to the secreted. The catalysed reaction is Eliminative cleavage of (1-&gt;4)-alpha-D-galacturonan methyl ester to give oligosaccharides with 4-deoxy-6-O-methyl-alpha-D-galact-4-enuronosyl groups at their non-reducing ends.. Inhibited by Hg(2+) and Mn(2+). Not affected by EDTA in vitro. Catalyzes the depolymerization of pectins of methyl esterification degree from 13 to 75%, with an endo mode of action. Cannot degrade polygalacturonate. Also displays protopectinase activity, i.e. releases pectin from protopectin. The protein is Pectin lyase (pelB) of Bacillus subtilis.